The following is a 283-amino-acid chain: Non-selective voltage-gated ion channel VDAC3 (283 aa).

The residue at position 2 (C2) is an N-acetylcysteine. A Phosphothreonine modification is found at T4. Residues K12, K15, and K20 each carry the N6-acetyllysine modification. 2 beta stranded membrane passes run 26–35 (MVKIDLKTKS) and 39–47 (VEFSTSGHA). A Glycyl lysine isopeptide (Lys-Gly) (interchain with G-Cter in ubiquitin) cross-link involves residue K53. Transmembrane regions (beta stranded) follow at residues 54–64 (ASGNLETKYKV), 69–76 (LTFTQKWN), and 80–89 (TLGTEISWEN). N6-acetyllysine is present on K90. Residues 95-104 (LKLTLDTIFV) form a beta stranded membrane-spanning segment. Glycyl lysine isopeptide (Lys-Gly) (interchain with G-Cter in ubiquitin) cross-links involve residues K109 and K110. A run of 10 beta stranded transmembrane segments spans residues 111–120 (SGKLKASYRR), 123–130 (FSLGSNVD), 137–145 (TIYGWAVLA), 150–158 (LAGYQMSFD), 163–175 (KLSQ…GYKA), 178–185 (FQLHTHVN), 189–198 (EFGGSIYQKV), 202–211 (IETSINLAWT), 218–227 (RFGIAAKYKL), and 231–238 (TSLSAKVN). S241 carries the post-translational modification Phosphoserine. NAD(+) is bound by residues 242–244 (LIG) and 260–264 (SALID). Beta stranded transmembrane passes span 242-251 (LIGLGYTQTL) and 254-263 (GVKLTLSALI). At K266 the chain carries N6-acetyllysine; alternate. K266 participates in a covalent cross-link: Glycyl lysine isopeptide (Lys-Gly) (interchain with G-Cter in ubiquitin); alternate. Residues 273-282 (HKVGLGFELE) form a beta stranded membrane-spanning segment.

The protein belongs to the eukaryotic mitochondrial porin family. As to quaternary structure, interacts with ARMC12 in a TBC1D21-dependent manner. Interacts with MISFA. In terms of processing, ubiquitinated by PRKN during mitophagy, leading to its degradation and enhancement of mitophagy. Deubiquitinated by USP30. As to expression, highest levels of expression detected in testis, less but still abundant expression in heart, kidney, brain, and skeletal muscle.

It is found in the mitochondrion outer membrane. Its subcellular location is the membrane. It catalyses the reaction chloride(in) = chloride(out). The enzyme catalyses K(+)(in) = K(+)(out). Non-selective voltage-gated ion channel that mediates the transport of anions and cations through the mitochondrion outer membrane and plasma membrane. Forms a high-conducting channel with a stable open state and a voltage-induced closure with a mild preference for anions over cations. Involved in male fertility and sperm mitochondrial sheath formation. The protein is Non-selective voltage-gated ion channel VDAC3 of Mus musculus (Mouse).